Consider the following 577-residue polypeptide: Arginine--tRNA ligase (577 aa).

The 'HIGH' region signature appears at 122–132; the sequence is PNVAKEMHVGH.

Belongs to the class-I aminoacyl-tRNA synthetase family. Monomer.

The protein resides in the cytoplasm. The enzyme catalyses tRNA(Arg) + L-arginine + ATP = L-arginyl-tRNA(Arg) + AMP + diphosphate. The protein is Arginine--tRNA ligase of Escherichia coli O157:H7 (strain EC4115 / EHEC).